The sequence spans 309 residues: Elongation factor Ts, mitochondrial (309 aa).

This sequence belongs to the EF-Ts family.

Its subcellular location is the mitochondrion. Its function is as follows. Associates with the EF-Tu.GDP complex and induces the exchange of GDP to GTP. It remains bound to the aminoacyl-tRNA.EF-Tu.GTP complex up to the GTP hydrolysis stage on the ribosome. The sequence is that of Elongation factor Ts, mitochondrial (tsfm) from Salmo salar (Atlantic salmon).